The sequence spans 609 residues: Chloride channel CLIC-like protein 1 (609 aa).

An N-terminal signal peptide occupies residues 1–25; that stretch reads MKLSSSSSFGLCILVVFFCFVVIES. Transmembrane regions (helical) follow at residues 212 to 235, 241 to 260, and 358 to 380; these read VSLI…SWFV, FAVS…YMLA, and VTLQ…YGSA. The interval 398–553 is disordered; that stretch reads EQPPPAVGQR…PSSIDVKTVG (156 aa). 2 stretches are compositionally biased toward basic and acidic residues: residues 454–474 and 507–537; these read ENRE…KRTP and EEVK…DRSE. Over residues 538 to 547 the composition is skewed to low complexity; it reads PITSEPPSSI.

The protein belongs to the chloride channel MCLC family. Expressed in the hindbrain, swim bladder and the eye at 1 day post fertilization (dpf) with increased expression at 3 dpf. At 3 dpf, most prominent expression in the retina, with strong expression in the ganglion cell layer, outer nuclear layer and the retinal pigmented epithelium.

The protein resides in the endoplasmic reticulum membrane. It localises to the golgi apparatus membrane. It is found in the nucleus membrane. Its function is as follows. Seems to act as a chloride ion channel. Plays a role in retina development. This is Chloride channel CLIC-like protein 1 from Danio rerio (Zebrafish).